A 58-amino-acid chain; its full sequence is Metallothionein (58 aa).

A beta region spans residues 1–29; it reads PDPCCAEGTCECEEGKCKAGCKCTSCRCS. Cys-4, Cys-5, Cys-10, Cys-12, Cys-17, Cys-21, Cys-23, Cys-26, Cys-28, Cys-31, Cys-34, Cys-38, Cys-40, Cys-46, Cys-50, Cys-54, Cys-56, and Cys-57 together coordinate a divalent metal cation. The tract at residues 30–58 is alpha; sequence PCEKCTSECECKSKEECAKNCTKPCSCCP.

Metallothioneins have a high content of cysteine residues that bind various heavy metals. Class I MTS in crustacea are involved in the sequestration of elevated levels of heavy-metal ions. The sequence is that of Metallothionein from Potamon potamios.